The sequence spans 227 residues: 7-cyano-7-deazaguanine synthase (227 aa).

7 to 17 contacts ATP; the sequence is LSGGMDSLVTT. The Zn(2+) site is built by Cys187, Cys195, Cys198, and Cys201.

Belongs to the QueC family. It depends on Zn(2+) as a cofactor.

It catalyses the reaction 7-carboxy-7-deazaguanine + NH4(+) + ATP = 7-cyano-7-deazaguanine + ADP + phosphate + H2O + H(+). It functions in the pathway purine metabolism; 7-cyano-7-deazaguanine biosynthesis. Functionally, catalyzes the ATP-dependent conversion of 7-carboxy-7-deazaguanine (CDG) to 7-cyano-7-deazaguanine (preQ(0)). The chain is 7-cyano-7-deazaguanine synthase from Chlorobium phaeovibrioides (strain DSM 265 / 1930) (Prosthecochloris vibrioformis (strain DSM 265)).